The chain runs to 515 residues: Putative pumilio homolog 8, chloroplastic (515 aa).

The segment at 1 to 33 is disordered; the sequence is MMRGEFGEASSLSRSPSSPLQTEPHPQSPKFYR. The transit peptide at 1–70 directs the protein to the chloroplast; the sequence is MMRGEFGEAS…LSSYFSNGLC (70 aa). Low complexity predominate over residues 10–20; the sequence is SSLSRSPSSPL. Residues 174–515 enclose the PUM-HD domain; that stretch reads SGVGALFDHQ…RIFSRNLLKN (342 aa). Pumilio repeat units lie at residues 198–233, 234–269, 270–308, 310–345, 346–381, 382–417, 418–456, and 457–490; these read EFQGYVYFMAKDQHGCRFLQWIFEDGSALDALVIFS, EVIPHVVELMMDPFGNYLMQKLLDVCNEEQRTQIIL, MVTSEPGQLIRISLNAYGTRVVQRLVESIKTRKQISLVK, ALRPGFLNLIRDLNGNHVIQRCLQCLSTEDNEFIFE, DATKFCIDIATHRHGCCVLQKCIAYSSGLQREKLVT, EISRNSLFLAQDPYGNYAVQFVLELRDFSAIAAMLA, QLKGHYVELSMQKFSSHMVERCLTHCPESRPQIVRELIS, and VPHFDILIQDPYANFVIQAALAVTKGSLHATLVE.

It localises to the plastid. The protein localises to the chloroplast. The protein resides in the cytoplasm. Its function is as follows. Sequence-specific RNA-binding protein that regulates translation and mRNA stability by binding the 3'-UTR of target mRNAs. The protein is Putative pumilio homolog 8, chloroplastic (APUM8) of Arabidopsis thaliana (Mouse-ear cress).